A 457-amino-acid chain; its full sequence is Bifunctional protein GlmU (457 aa).

Residues 1–230 are pyrophosphorylase; the sequence is MSKRYAVVLA…FEESLGVNDR (230 aa). UDP-N-acetyl-alpha-D-glucosamine contacts are provided by residues 9–12, K23, Q73, and 78–79; these read LAAG and GT. Residue D103 coordinates Mg(2+). UDP-N-acetyl-alpha-D-glucosamine contacts are provided by G140, E155, N170, and N228. N228 serves as a coordination point for Mg(2+). Positions 231-251 are linker; that stretch reads IALAEASKLMQRRINDNHMRN. The interval 252-457 is N-acetyltransferase; sequence GVTLVNPENT…DYAKRLNHGK (206 aa). 2 residues coordinate UDP-N-acetyl-alpha-D-glucosamine: R333 and K351. H363 (proton acceptor) is an active-site residue. Positions 366 and 377 each coordinate UDP-N-acetyl-alpha-D-glucosamine. Residues 386–387, A423, and R440 contribute to the acetyl-CoA site; that span reads NY.

In the N-terminal section; belongs to the N-acetylglucosamine-1-phosphate uridyltransferase family. It in the C-terminal section; belongs to the transferase hexapeptide repeat family. In terms of assembly, homotrimer. The cofactor is Mg(2+).

It localises to the cytoplasm. The catalysed reaction is alpha-D-glucosamine 1-phosphate + acetyl-CoA = N-acetyl-alpha-D-glucosamine 1-phosphate + CoA + H(+). It carries out the reaction N-acetyl-alpha-D-glucosamine 1-phosphate + UTP + H(+) = UDP-N-acetyl-alpha-D-glucosamine + diphosphate. It functions in the pathway nucleotide-sugar biosynthesis; UDP-N-acetyl-alpha-D-glucosamine biosynthesis; N-acetyl-alpha-D-glucosamine 1-phosphate from alpha-D-glucosamine 6-phosphate (route II): step 2/2. It participates in nucleotide-sugar biosynthesis; UDP-N-acetyl-alpha-D-glucosamine biosynthesis; UDP-N-acetyl-alpha-D-glucosamine from N-acetyl-alpha-D-glucosamine 1-phosphate: step 1/1. The protein operates within bacterial outer membrane biogenesis; LPS lipid A biosynthesis. Its function is as follows. Catalyzes the last two sequential reactions in the de novo biosynthetic pathway for UDP-N-acetylglucosamine (UDP-GlcNAc). The C-terminal domain catalyzes the transfer of acetyl group from acetyl coenzyme A to glucosamine-1-phosphate (GlcN-1-P) to produce N-acetylglucosamine-1-phosphate (GlcNAc-1-P), which is converted into UDP-GlcNAc by the transfer of uridine 5-monophosphate (from uridine 5-triphosphate), a reaction catalyzed by the N-terminal domain. This is Bifunctional protein GlmU from Listeria welshimeri serovar 6b (strain ATCC 35897 / DSM 20650 / CCUG 15529 / CIP 8149 / NCTC 11857 / SLCC 5334 / V8).